Reading from the N-terminus, the 313-residue chain is Dimethyladenosine transferase (313 aa).

The tract at residues 1–21 is disordered; the sequence is MPKVKSGAIGRRRGRQEQRRE. The S-adenosyl-L-methionine site is built by histidine 37, leucine 39, glycine 64, glutamate 85, aspartate 113, and asparagine 128.

The protein belongs to the class I-like SAM-binding methyltransferase superfamily. rRNA adenine N(6)-methyltransferase family. Part of the small subunit (SSU) processome, composed of more than 70 proteins and the RNA chaperone small nucleolar RNA (snoRNA) U3.

Its subcellular location is the nucleus. It localises to the nucleoplasm. The protein resides in the nucleolus. The enzyme catalyses adenosine(1779)/adenosine(1780) in 18S rRNA + 4 S-adenosyl-L-methionine = N(6)-dimethyladenosine(1779)/N(6)-dimethyladenosine(1780) in 18S rRNA + 4 S-adenosyl-L-homocysteine + 4 H(+). Its function is as follows. Specifically dimethylates two adjacent adenosines in the loop of a conserved hairpin near the 3'-end of 18S rRNA in the 40S particle. Involved in the pre-rRNA processing steps leading to small-subunit rRNA production independently of its RNA-modifying catalytic activity. Part of the small subunit (SSU) processome, first precursor of the small eukaryotic ribosomal subunit. During the assembly of the SSU processome in the nucleolus, many ribosome biogenesis factors, an RNA chaperone and ribosomal proteins associate with the nascent pre-rRNA and work in concert to generate RNA folding, modifications, rearrangements and cleavage as well as targeted degradation of pre-ribosomal RNA by the RNA exosome. In Homo sapiens (Human), this protein is Dimethyladenosine transferase.